Here is a 71-residue protein sequence, read N- to C-terminus: SPbeta prophage-derived uncharacterized protein YopF (71 aa).

This Bacillus subtilis (strain 168) protein is SPbeta prophage-derived uncharacterized protein YopF (yopF).